The sequence spans 182 residues: Ribosome hibernation promotion factor (182 aa).

The protein belongs to the HPF/YfiA ribosome-associated protein family. Long HPF subfamily. As to quaternary structure, interacts with 100S ribosomes.

It is found in the cytoplasm. In terms of biological role, required for dimerization of active 70S ribosomes into 100S ribosomes in stationary phase; 100S ribosomes are translationally inactive and sometimes present during exponential growth. This Streptococcus pyogenes serotype M6 (strain ATCC BAA-946 / MGAS10394) protein is Ribosome hibernation promotion factor.